We begin with the raw amino-acid sequence, 432 residues long: Non-peptidase homolog YmxG (432 aa).

A signal peptide spans 1-20 (MKKFLITLLLGVFMGLQASA).

This sequence belongs to the peptidase M16 family.

Its subcellular location is the secreted. Functionally, may contribute to the full activity of the protease PqqE. This chain is Non-peptidase homolog YmxG, found in Helicobacter pylori (strain ATCC 700392 / 26695) (Campylobacter pylori).